We begin with the raw amino-acid sequence, 85 residues long: Protein C4 (85 aa).

Gly-2 is lipidated: N-myristoyl glycine; by host. Residues 42–65 (LNPAPTSSPTSTRTETQLNGGNSR) form a disordered region. Over residues 44–57 (PAPTSSPTSTRTET) the composition is skewed to low complexity.

This sequence belongs to the geminiviridae protein AC4/C4 family. As to quaternary structure, interacts with Arabidopsis thaliana RCH2, ASK7/ASK-eta and ASK6/ASK-zeta. Post-translationally, phosphorylated by Arabidopsis thaliana ASK7/ASK-eta mainly on threonine and serine residues. As to expression, expressed in vascular tissues, and especially in phloem cells.

The protein resides in the host cell membrane. In terms of biological role, major determinant of pathogenesis that affects the hyperplastic response of the host to viral infection. Mediates the induction of cell division in permissive cells, mainly in phloem. May act as a suppressor of RNA-mediated gene silencing, also known as post-transcriptional gene silencing (PTGS), a mechanism of plant viral defense that limits the accumulation of viral RNAs. The polypeptide is Protein C4 (Beet curly top virus (strain California/Logan) (BCTV)).